Reading from the N-terminus, the 228-residue chain is Cytochrome c oxidase subunit 2 (228 aa).

The Mitochondrial intermembrane segment spans residues 1-26 (MSTWANLGLQDSASPLMEQLIFFHDH). Residues 27–48 (ALLILVMITVLVGYLMFMLFFN) form a helical membrane-spanning segment. Residues 49 to 62 (NYVNRFLLHGQLIE) are Mitochondrial matrix-facing. Residues 63 to 82 (MIWTILPAIILLFIALPSLR) form a helical membrane-spanning segment. At 83–228 (LLYLLDEINE…FIKWISSNNS (146 aa)) the chain is on the mitochondrial intermembrane side. Histidine 161, cysteine 196, glutamate 198, cysteine 200, histidine 204, and methionine 207 together coordinate Cu cation. Glutamate 198 contributes to the Mg(2+) binding site.

It belongs to the cytochrome c oxidase subunit 2 family. Component of the cytochrome c oxidase (complex IV, CIV), a multisubunit enzyme composed of a catalytic core of 3 subunits and several supernumerary subunits. The complex exists as a monomer or a dimer and forms supercomplexes (SCs) in the inner mitochondrial membrane with ubiquinol-cytochrome c oxidoreductase (cytochrome b-c1 complex, complex III, CIII). The cofactor is Cu cation.

The protein resides in the mitochondrion inner membrane. It carries out the reaction 4 Fe(II)-[cytochrome c] + O2 + 8 H(+)(in) = 4 Fe(III)-[cytochrome c] + 2 H2O + 4 H(+)(out). Its function is as follows. Component of the cytochrome c oxidase, the last enzyme in the mitochondrial electron transport chain which drives oxidative phosphorylation. The respiratory chain contains 3 multisubunit complexes succinate dehydrogenase (complex II, CII), ubiquinol-cytochrome c oxidoreductase (cytochrome b-c1 complex, complex III, CIII) and cytochrome c oxidase (complex IV, CIV), that cooperate to transfer electrons derived from NADH and succinate to molecular oxygen, creating an electrochemical gradient over the inner membrane that drives transmembrane transport and the ATP synthase. Cytochrome c oxidase is the component of the respiratory chain that catalyzes the reduction of oxygen to water. Electrons originating from reduced cytochrome c in the intermembrane space (IMS) are transferred via the dinuclear copper A center (CU(A)) of subunit 2 and heme A of subunit 1 to the active site in subunit 1, a binuclear center (BNC) formed by heme A3 and copper B (CU(B)). The BNC reduces molecular oxygen to 2 water molecules using 4 electrons from cytochrome c in the IMS and 4 protons from the mitochondrial matrix. In Drosophila simulans (Fruit fly), this protein is Cytochrome c oxidase subunit 2 (mt:CoII).